Here is a 78-residue protein sequence, read N- to C-terminus: Large ribosomal subunit protein eL20 (78 aa).

Belongs to the eukaryotic ribosomal protein eL20 family. In terms of assembly, part of the 50S ribosomal subunit. Binds 23S rRNA.

This Pyrobaculum arsenaticum (strain DSM 13514 / JCM 11321 / PZ6) protein is Large ribosomal subunit protein eL20.